We begin with the raw amino-acid sequence, 399 residues long: Glycosyltransferase BC10 (399 aa).

Over 1 to 17 (MKPPRRWMYGRGGGKGK) the chain is Cytoplasmic. The helical; Signal-anchor for type II membrane protein transmembrane segment at 18–38 (PAGLLLLGVFLCLSVVLLLLL) threads the bilayer. Over 39 to 399 (HGSSPSLEGE…LIAANGASTM (361 aa)) the chain is Lumenal. N-linked (GlcNAc...) asparagine glycosylation is found at asparagine 142 and asparagine 188.

It belongs to the glycosyltransferase 14 family. In terms of tissue distribution, expressed in roots, culms, leaves and panicles. Expressed in vascular bundles of leaf sheaths and stems where sclerenchyma cells are developing. Expressed in mechanical tissues of young organs, such as young leaf sheaths, stems and tiller buds.

The protein localises to the membrane. Functionally, glycosyltransferase required for the regulation of cellulose biosynthesis in the cell wall. Required for the biosynthesis of hexoses (glucose, mannose and galactose) in both cellulosic and non-cellulosic (pectins and hemicelluloses) components of cell walls. Required for the formation of arabinogalactan proteins which contribute to the strengthening of cell walls. Possesses low glycosyltransferase activity. This chain is Glycosyltransferase BC10, found in Oryza sativa subsp. japonica (Rice).